The chain runs to 1083 residues: MSFFDMFGPMFDPEGGSNRAGRQNPRKPSNDDPIILNVETDGGDGPQPSSNVPPKRPSGPRITSKPNRPRKPSNGSKIFIGVVLALAIVIGLFFALAQFVTDVMWYSQLGFQSVIWTQLGTRVGLWLAYAVLIAAVGFISATLAIWARPDAADGSTIRVNGDTIEIGKSVSSKSARRIAVVISLIVGLVFGSQFNANWSEILLMFNSQSFGTKDPQFGIDNGFYVFVLPGLKLIMSAVSLLLLAGIIFSIVTHVLMGGIRITMPVNGHGLFRITKRARRQIGIWLMLNMFAWAANQVLGVFSHLTEEGSRITGATYTTVNATIPVTFIMAAITAILGVILGLWIMKSHTLEGSAPIAARASEALKAWKVPTVAIASAIVVSLVLTVAWPVLLQRFRVNPNAQEMESTYIQRNIDATRAAYGLDKVKAEQYKATTEGEEGALADSAESTAQIRLLDPQIISPTFKQLQQSKQYYTFADTVAVDKYDVDGVSQDTVIAARELDLDGLDNRNWVNDHTVYTHGYGVVAAYGNKVTADGQPKFFEAGIPTQGKLTDSEKYEPRIYFSPNATEYSIVGAPEGTKSWEFDYPTGSEGATNTFKGDGGPKIGNIFSRLLYAIRFGSDQILFSNRVNSNSQILYDRSPKERVAKVAPYLTLDGRVYPAVVDGRVKWIVDGYTTSDAYPYSQMTDLGEATKDSTTESSDTVSSLNSKNANYIRNSVKATVDAYDGSVDLYVWDQSDPVVKAWEKIFPGQYHQLSEISGDLMSHMRYPESLFKVQRELLAKYHVSSANQFFSGEDFWQTPVDPTESQQAQQRDILQPPYYLTLQTGGSSEPVFSLTSSYIPAGSSTREILTGFLSVDSDAGHEKGKIGSSYGTIRLQELPKDSNVPGPGQAQNNFNASADVSKELNLLESGSTNVQRGNLLTLPLGGGLVYVQPVYVKSSGSTSFPLLKKVLVAFGDQVGFADTLDEALDQVFGGDSGASAGDAENVGDTTDDKQDAKNDDSADGKTNTDGKQDTPSNTDGKTGGNNGDSSGTMSADLKKALDDAAQAMKDSDAAMKKGDWSAYGDAQKQLQEALNKAIELEQ.

Residues 1–72 (MSFFDMFGPM…TSKPNRPRKP (72 aa)) form a disordered region. 7 helical membrane passes run 78-98 (IFIGVVLALAIVIGLFFALAQ), 125-145 (LWLAYAVLIAAVGFISATLAI), 178-198 (IAVVISLIVGLVFGSQFNANW), 239-259 (SLLLLAGIIFSIVTHVLMGGI), 281-301 (IGIWLMLNMFAWAANQVLGVF), 325-345 (VTFIMAAITAILGVILGLWIM), and 372-392 (VAIASAIVVSLVLTVAWPVLL). Residues 976 to 1061 (DSGASAGDAE…SDAAMKKGDW (86 aa)) are disordered. 2 stretches are compositionally biased toward basic and acidic residues: residues 991–1013 (TDDKQDAKNDDSADGKTNTDGKQ) and 1050–1060 (KDSDAAMKKGD).

It belongs to the UPF0182 family.

It localises to the cell membrane. This chain is UPF0182 protein BAD_0641, found in Bifidobacterium adolescentis (strain ATCC 15703 / DSM 20083 / NCTC 11814 / E194a).